A 504-amino-acid chain; its full sequence is Splicing factor SF3a60 homolog (504 aa).

At S2 the chain carries N-acetylserine. Disordered regions lie at residues 293–319 and 355–374; these read DKKH…SENA and YEEM…LESD. The segment covering 356–374 has biased composition (acidic residues); the sequence is EEMEGEREGEEANTELESD. S373 carries the post-translational modification Phosphoserine. The segment at 409 to 440 adopts a Matrin-type zinc-finger fold; it reads FKCEICGNYSYWGRRAFERHFKEWRHQHGMRC.

The protein belongs to the SF3A3 family. As to expression, expressed at moderate levels in all sporophytic tissues with strongest expression in gametophytes.

It is found in the nucleus. Splicing factor homolog to SF3a60 that may be involved in pre-spliceosome formation. Is necessary for gametic cell fate determination. The chain is Splicing factor SF3a60 homolog from Arabidopsis thaliana (Mouse-ear cress).